The following is a 378-amino-acid chain: Inner membrane protein YibH (378 aa).

The Periplasmic segment spans residues 1–3 (MDL). The chain crosses the membrane as a helical span at residues 4 to 24 (LIVLTYVALAWAVFKIFRIPV). The Cytoplasmic segment spans residues 25–26 (NQ). A helical transmembrane segment spans residues 27-47 (WTLATAALGGVFLVSGLILLM). At 48-54 (NYNHPYT) the chain is on the periplasmic side. Residues 55–75 (FTAQKAVIAIPITPQVTGIVT) form a helical membrane-spanning segment. Residues 76-232 (EVTDKNNQLI…RAPSNGYVTQ (157 aa)) lie on the Cytoplasmic side of the membrane. A helical transmembrane segment spans residues 233–253 (VLIRPGTYAAALPLRPVMVFI). The Periplasmic segment spans residues 254-280 (PEQKRQIVAQFRQNSLLRLKPGDDAEV). The helical transmembrane segment at 281–301 (VFNALPGQVFHGKLTSILPVV) threads the bilayer. The Cytoplasmic portion of the chain corresponds to 302 to 309 (PGGSYQAQ). The chain crosses the membrane as a helical span at residues 310 to 330 (GVLQSLTVVPGTDGVLGTIEL). At 331–378 (DPNDDIDALPDGIYAQVAVYSDHFSHVSVMRKVLLRMTSWMHYLYLDH) the chain is on the periplasmic side.

This sequence belongs to the membrane fusion protein (MFP) (TC 8.A.1) family.

The protein resides in the cell inner membrane. This chain is Inner membrane protein YibH (yibH), found in Escherichia coli O157:H7.